The sequence spans 281 residues: sn-glycerol-3-phosphate transport system permease protein UgpE (281 aa).

A run of 6 helical transmembrane segments spans residues 16–36 (LILG…AATL), 85–105 (FSIT…IVWF), 113–133 (FFWM…FPTV), 142–162 (LDSY…TFLF), 202–222 (ALFV…LLII), and 247–267 (WNQV…IVLA). One can recognise an ABC transmembrane type-1 domain in the interval 77 to 268 (MLNSFIMAFS…IPPVVIVLAM (192 aa)).

This sequence belongs to the binding-protein-dependent transport system permease family. UgpAE subfamily. The complex is composed of two ATP-binding proteins (UgpC), two transmembrane proteins (UgpA and UgpE) and a solute-binding protein (UgpB).

It localises to the cell inner membrane. Its function is as follows. Part of the ABC transporter complex UgpBAEC involved in sn-glycerol-3-phosphate (G3P) import. Probably responsible for the translocation of the substrate across the membrane. This is sn-glycerol-3-phosphate transport system permease protein UgpE (ugpE) from Salmonella choleraesuis (strain SC-B67).